A 308-amino-acid polypeptide reads, in one-letter code: GTPase Era (308 aa).

Positions 14-181 (RCGFVALIGA…RSTLAEMVPP (168 aa)) constitute an Era-type G domain. The interval 22 to 29 (GAPNVGKS) is G1. 22–29 (GAPNVGKS) provides a ligand contact to GTP. Residues 48-52 (QTTRA) form a G2 region. Residues 69-72 (DTPG) form a G3 region. Residues 69 to 73 (DTPGI) and 131 to 134 (NKVD) each bind GTP. A G4 region spans residues 131–134 (NKVD). A G5 region spans residues 160 to 162 (IAA). Residues 212–289 (LHQELPYQST…HLFLFVKVRE (78 aa)) form the KH type-2 domain.

This sequence belongs to the TRAFAC class TrmE-Era-EngA-EngB-Septin-like GTPase superfamily. Era GTPase family. Monomer.

The protein localises to the cytoplasm. It is found in the cell inner membrane. In terms of biological role, an essential GTPase that binds both GDP and GTP, with rapid nucleotide exchange. Plays a role in 16S rRNA processing and 30S ribosomal subunit biogenesis and possibly also in cell cycle regulation and energy metabolism. The sequence is that of GTPase Era from Bradyrhizobium diazoefficiens (strain JCM 10833 / BCRC 13528 / IAM 13628 / NBRC 14792 / USDA 110).